The chain runs to 421 residues: Acetate kinase (421 aa).

Residue Asn7 participates in Mg(2+) binding. ATP is bound at residue Lys14. Arg91 lines the substrate pocket. Residue Asp148 is the Proton donor/acceptor of the active site. Residues 208-212 (HIGNG) and 283-285 (DRR) contribute to the ATP site. A Mg(2+)-binding site is contributed by Glu387.

Belongs to the acetokinase family. Homodimer. Requires Mg(2+) as cofactor. Mn(2+) serves as cofactor.

The protein localises to the cytoplasm. It carries out the reaction acetate + ATP = acetyl phosphate + ADP. It functions in the pathway metabolic intermediate biosynthesis; acetyl-CoA biosynthesis; acetyl-CoA from acetate: step 1/2. Catalyzes the formation of acetyl phosphate from acetate and ATP. Can also catalyze the reverse reaction. This is Acetate kinase from Geobacter sulfurreducens (strain ATCC 51573 / DSM 12127 / PCA).